Here is a 467-residue protein sequence, read N- to C-terminus: Adenosylhomocysteinase (467 aa).

Substrate contacts are provided by T68, D144, and E169. NAD(+) is bound at residue 170-172 (TTT). Substrate contacts are provided by K199 and D203. NAD(+) contacts are provided by residues N204, 233 to 238 (GYGDVG), E256, N305, 326 to 328 (IGH), and N373.

It belongs to the adenosylhomocysteinase family. The cofactor is NAD(+).

It localises to the cytoplasm. It carries out the reaction S-adenosyl-L-homocysteine + H2O = L-homocysteine + adenosine. The protein operates within amino-acid biosynthesis; L-homocysteine biosynthesis; L-homocysteine from S-adenosyl-L-homocysteine: step 1/1. May play a key role in the regulation of the intracellular concentration of adenosylhomocysteine. The protein is Adenosylhomocysteinase of Acinetobacter baylyi (strain ATCC 33305 / BD413 / ADP1).